Reading from the N-terminus, the 463-residue chain is Chaperone SurA (463 aa).

An N-terminal signal peptide occupies residues 1–25 (MTKPFSVLLASLLVITSTVSPLASA). PpiC domains follow at residues 174–276 (GSQY…KLVE) and 289–388 (LTEY…QRVG). Disordered stretches follow at residues 329–348 (ATAK…GDLG) and 434–463 (GDRA…QPTR). Low complexity predominate over residues 440–452 (DATAAPEPAAAPA). Over residues 453 to 463 (APTPPPAQPTR) the composition is skewed to pro residues.

It is found in the periplasm. The enzyme catalyses [protein]-peptidylproline (omega=180) = [protein]-peptidylproline (omega=0). Chaperone involved in the correct folding and assembly of outer membrane proteins. Recognizes specific patterns of aromatic residues and the orientation of their side chains, which are found more frequently in integral outer membrane proteins. May act in both early periplasmic and late outer membrane-associated steps of protein maturation. The chain is Chaperone SurA from Xanthomonas campestris pv. campestris (strain 8004).